Reading from the N-terminus, the 99-residue chain is Aspartyl/glutamyl-tRNA(Asn/Gln) amidotransferase subunit C (99 aa).

This sequence belongs to the GatC family. In terms of assembly, heterotrimer of A, B and C subunits.

It carries out the reaction L-glutamyl-tRNA(Gln) + L-glutamine + ATP + H2O = L-glutaminyl-tRNA(Gln) + L-glutamate + ADP + phosphate + H(+). The enzyme catalyses L-aspartyl-tRNA(Asn) + L-glutamine + ATP + H2O = L-asparaginyl-tRNA(Asn) + L-glutamate + ADP + phosphate + 2 H(+). In terms of biological role, allows the formation of correctly charged Asn-tRNA(Asn) or Gln-tRNA(Gln) through the transamidation of misacylated Asp-tRNA(Asn) or Glu-tRNA(Gln) in organisms which lack either or both of asparaginyl-tRNA or glutaminyl-tRNA synthetases. The reaction takes place in the presence of glutamine and ATP through an activated phospho-Asp-tRNA(Asn) or phospho-Glu-tRNA(Gln). The polypeptide is Aspartyl/glutamyl-tRNA(Asn/Gln) amidotransferase subunit C (Rhodococcus erythropolis (strain PR4 / NBRC 100887)).